We begin with the raw amino-acid sequence, 228 residues long: GDT1-like protein 5 (228 aa).

Gly2 bears the N-acetylglycine mark. 6 consecutive transmembrane segments (helical) span residues 12-32 (LAMT…AILA), 39-59 (LVLA…ATLG), 71-91 (THHI…WDGF), 133-153 (PFLT…NFFG), 173-193 (LGVV…AVLG), and 205-225 (IVAL…LLTP).

It belongs to the GDT1 family.

It is found in the membrane. The polypeptide is GDT1-like protein 5 (Arabidopsis thaliana (Mouse-ear cress)).